The chain runs to 735 residues: Glutamine-dependent NAD(+) synthetase (735 aa).

The region spanning 4–274 (LRVATCNLNQ…VEVLDALVDL (271 aa)) is the CN hydrolase domain. Glutamate 44 acts as the Proton acceptor; for glutaminase activity in catalysis. Residue lysine 113 is the For glutaminase activity of the active site. Residue cysteine 174 is the Nucleophile; for glutaminase activity of the active site. Residues 324–711 (YHRPEEEIAF…STEGELRRRK (388 aa)) are ligase. 354–361 (PLSGGADS) serves as a coordination point for ATP. Residue serine 356 is part of the active site.

It in the C-terminal section; belongs to the NAD synthetase family.

The catalysed reaction is deamido-NAD(+) + L-glutamine + ATP + H2O = L-glutamate + AMP + diphosphate + NAD(+) + H(+). It functions in the pathway cofactor biosynthesis; NAD(+) biosynthesis; NAD(+) from deamido-NAD(+) (L-Gln route): step 1/1. The sequence is that of Glutamine-dependent NAD(+) synthetase from Oryza sativa subsp. indica (Rice).